The following is a 343-amino-acid chain: ATPase GET3 (343 aa).

ATP is bound at residue 32–39 (KGGVGKTT). Asp61 is a catalytic residue. Residues Glu245 and Asn272 each contribute to the ATP site. Zn(2+) is bound by residues Cys283 and Cys286.

The protein belongs to the arsA ATPase family. As to quaternary structure, homodimer.

The protein resides in the cytoplasm. It is found in the endoplasmic reticulum. Its function is as follows. ATPase required for the post-translational delivery of tail-anchored (TA) proteins to the endoplasmic reticulum. Recognizes and selectively binds the transmembrane domain of TA proteins in the cytosol. This complex then targets to the endoplasmic reticulum by membrane-bound receptors, where the tail-anchored protein is released for insertion. This process is regulated by ATP binding and hydrolysis. ATP binding drives the homodimer towards the closed dimer state, facilitating recognition of newly synthesized TA membrane proteins. ATP hydrolysis is required for insertion. Subsequently, the homodimer reverts towards the open dimer state, lowering its affinity for the membrane-bound receptor, and returning it to the cytosol to initiate a new round of targeting. This is ATPase GET3 from Pyricularia oryzae (strain 70-15 / ATCC MYA-4617 / FGSC 8958) (Rice blast fungus).